A 518-amino-acid chain; its full sequence is Glutamate--cysteine ligase (518 aa).

This sequence belongs to the glutamate--cysteine ligase type 1 family. Type 1 subfamily.

The enzyme catalyses L-cysteine + L-glutamate + ATP = gamma-L-glutamyl-L-cysteine + ADP + phosphate + H(+). It functions in the pathway sulfur metabolism; glutathione biosynthesis; glutathione from L-cysteine and L-glutamate: step 1/2. The sequence is that of Glutamate--cysteine ligase from Escherichia coli O8 (strain IAI1).